The sequence spans 574 residues: Alpha-mannosidase I MNS5 (574 aa).

The Cytoplasmic portion of the chain corresponds to 1-9 (MSCPIHPRR). Residues 10 to 26 (LFLCLLISLTFFVVDPS) form a helical; Signal-anchor for type II membrane protein membrane-spanning segment. Residues 27-574 (SQHIEVKKKQ…VGYCGLWNPL (548 aa)) are Lumenal-facing. N89, N107, and N121 each carry an N-linked (GlcNAc...) asparagine glycan. Catalysis depends on E134, which acts as the Proton donor. N201 is a glycosylation site (N-linked (GlcNAc...) asparagine). Residue D274 is part of the active site. An N-linked (GlcNAc...) asparagine glycan is attached at N349. E367 acts as the Proton donor in catalysis. E388 is an active-site residue. T471 contributes to the Ca(2+) binding site. The N-linked (GlcNAc...) asparagine glycan is linked to N494.

It belongs to the glycosyl hydrolase 47 family. Requires Ca(2+) as cofactor.

It is found in the endoplasmic reticulum membrane. Its pathway is protein modification; protein glycosylation. Functionally, can convert Man(9)GlcNAc(2) and Man(8)GlcNAc(2) into N-glycans with a terminal alpha-1,6-linked Man residue in the C-branch. Functions in the formation of unique N-glycan structures that are specifically recognized by components of the endoplasmic reticulum-associated degradation (ERAD) machinery, which leads to the degradation of misfolded glycoproteins. Most likely generates N-glycan signal on misfolded glycoproteins that is subsequently recognized by OS9. Required for ERAD of the heavily glycosylated and misfolded BRI1 variants BRI1-5 and BRI1-9. Does not seem to play role in N-glycan processing of correctly folded proteins destined for secretion. This chain is Alpha-mannosidase I MNS5 (MNS5), found in Arabidopsis thaliana (Mouse-ear cress).